We begin with the raw amino-acid sequence, 338 residues long: Glyceraldehyde-3-phosphate dehydrogenase, cytosolic (338 aa).

NAD(+)-binding positions include 14–15 (RI), D36, and R83. Residues 154-156 (SCT), T185, 214-215 (TG), and R237 each bind D-glyceraldehyde 3-phosphate. C155 acts as the Nucleophile in catalysis. NAD(+) is bound at residue N319.

The protein belongs to the glyceraldehyde-3-phosphate dehydrogenase family. Homotetramer.

Its subcellular location is the cytoplasm. It catalyses the reaction D-glyceraldehyde 3-phosphate + phosphate + NAD(+) = (2R)-3-phospho-glyceroyl phosphate + NADH + H(+). The protein operates within carbohydrate degradation; glycolysis; pyruvate from D-glyceraldehyde 3-phosphate: step 1/5. In terms of biological role, key enzyme in glycolysis that catalyzes the first step of the pathway by converting D-glyceraldehyde 3-phosphate (G3P) into 3-phospho-D-glyceroyl phosphate. Essential for the maintenance of cellular ATP levels and carbohydrate metabolism. This chain is Glyceraldehyde-3-phosphate dehydrogenase, cytosolic (GAPC1), found in Pisum sativum (Garden pea).